A 358-amino-acid polypeptide reads, in one-letter code: S-adenosylmethionine:tRNA ribosyltransferase-isomerase (358 aa).

This sequence belongs to the QueA family. Monomer.

The protein resides in the cytoplasm. The catalysed reaction is 7-aminomethyl-7-carbaguanosine(34) in tRNA + S-adenosyl-L-methionine = epoxyqueuosine(34) in tRNA + adenine + L-methionine + 2 H(+). It functions in the pathway tRNA modification; tRNA-queuosine biosynthesis. In terms of biological role, transfers and isomerizes the ribose moiety from AdoMet to the 7-aminomethyl group of 7-deazaguanine (preQ1-tRNA) to give epoxyqueuosine (oQ-tRNA). This is S-adenosylmethionine:tRNA ribosyltransferase-isomerase from Rhodopseudomonas palustris (strain BisA53).